The sequence spans 185 residues: Ribosome-recycling factor (185 aa).

Belongs to the RRF family.

The protein localises to the cytoplasm. Functionally, responsible for the release of ribosomes from messenger RNA at the termination of protein biosynthesis. May increase the efficiency of translation by recycling ribosomes from one round of translation to another. The chain is Ribosome-recycling factor from Campylobacter jejuni subsp. doylei (strain ATCC BAA-1458 / RM4099 / 269.97).